Consider the following 452-residue polypeptide: Lamina-associated polypeptide 2, isoforms beta/delta/epsilon/gamma (452 aa).

Residues M1–S409 form a nucleoplasmic region. Residues L5–R48 form the LEM-like domain. 2 disordered regions span residues R48–V111 and R149–T263. Residues N49–D108 form a linker region. S59, S66, and S67 each carry phosphoserine. T74 is subject to Phosphothreonine. 2 positions are modified to phosphoserine: S79 and S82. Omega-N-methylarginine is present on residues R85 and R87. Residues K96–D105 are compositionally biased toward basic and acidic residues. The 45-residue stretch at L109–T153 folds into the LEM domain. Residues T137–L242 form an NAKAP95-binding N region. The residue at position 153 (T153) is a Phosphothreonine. Over residues E154–N177 the composition is skewed to polar residues. Residues S155 and S158 each carry the phosphoserine modification. T159 and T163 each carry phosphothreonine. Phosphoserine is present on residues S165, S167, and S176. Residues D178–K202 are compositionally biased toward basic and acidic residues. A Phosphoserine; by PKC modification is found at S179. S183 and S189 each carry phosphoserine. Residue K206 is modified to N6-acetyllysine. Position 210 is a phosphothreonine (T210). Phosphoserine occurs at positions 221 and 223. The span at G226–G240 shows a compositional bias: low complexity. S249, S253, S264, S291, S305, and S306 each carry phosphoserine. The interval T298 to A370 is binds lamins B. Positions G299–P373 are NAKAP95-binding C. A Phosphothreonine modification is found at T311. Position 314 is a phosphoserine (S314). R319 bears the Citrulline mark. 3 positions are modified to phosphoserine: S361, S377, and S384. The residue at position 388 (K388) is an N6-acetyllysine. K400 is covalently cross-linked (Glycyl lysine isopeptide (Lys-Gly) (interchain with G-Cter in SUMO2)). S401 carries the post-translational modification Phosphoserine. Residues V410–Y430 traverse the membrane as a helical; Signal-anchor for type II membrane protein segment. Residues Q431–N452 are Lumenal-facing.

This sequence belongs to the LEM family. In terms of assembly, interacts with LMNB1, LMNB2, BANF1, AKAP8L, GMCL and chromosomes. Post-translationally, mitosis-specific phosphorylation specifically abolishes its binding to lamin B and chromosomes. Citrullinated by PADI4.

The protein resides in the nucleus inner membrane. It is found in the chromosome. In terms of biological role, may help direct the assembly of the nuclear lamina and thereby help maintain the structural organization of the nuclear envelope. Possible receptor for attachment of lamin filaments to the inner nuclear membrane. May be involved in the control of initiation of DNA replication through its interaction with NAKAP95. The polypeptide is Lamina-associated polypeptide 2, isoforms beta/delta/epsilon/gamma (Tmpo) (Mus musculus (Mouse)).